Reading from the N-terminus, the 600-residue chain is Leiomodin-1 (600 aa).

The residue at position 12 (Ser-12) is a Phosphoserine. Disordered regions lie at residues 38–61, 80–324, and 472–573; these read VVDPDGSVPVGLRQRNQTEKQSTG, MQRE…PLER, and DKQR…QEKN. Basic and acidic residues-rich tracts occupy residues 80-127, 134-240, 247-256, 263-292, and 472-497; these read MQRE…EPKR, FSRD…EKMK, DMKKEDEKVK, DTKKDDEKVKKNEPLHEKEAKDDSKTKTPE, and DKQRQKRLQEQRQAQEAKGEKKDLLE. A phosphoserine mark is found at Ser-85 and Ser-135. Repeat copies occupy residues 165–180, 181–196, 197–212, 213–228, 229–244, 245–260, 261–276, and 277–293. The tract at residues 165–293 is 8 X approximate tandem repeats; that stretch reads AAVDKKEAGK…DDSKTKTPEK (129 aa). The segment at 508–527 is 5 X 4 AA approximate tandem repeats; it reads SPKPSPQPSPKPSPKNSPKK. Composition is skewed to pro residues over residues 510 to 522 and 532 to 543; these read KPSPQPSPKPSPK and AAPPPPPPPLAP. Residue Ser-555 is modified to Phosphoserine. A WH2 domain is found at 574 to 593; the sequence is SRDQLLAAIRSSNLKQLKKV.

Belongs to the tropomodulin family. Detected in lung vascular smooth muscle (at protein level). Detected in thyroid and extraocular smooth muscle, but not skeletal muscle. Detected in heart, aorta, skeletal muscle, colon, urinary bladder, uterus, stomach, and small intestine.

The protein resides in the cytoplasm. Its subcellular location is the myofibril. It localises to the sarcomere. It is found in the cytoskeleton. Its function is as follows. Required for proper contractility of visceral smooth muscle cells. Mediates nucleation of actin filaments. The sequence is that of Leiomodin-1 (LMOD1) from Homo sapiens (Human).